A 2167-amino-acid polypeptide reads, in one-letter code: Beige protein homolog 1 (2167 aa).

A BEACH-type PH domain is found at 1368–1499 (KDNDSIATIW…VRDDVLRVLN (132 aa)). The 295-residue stretch at 1545 to 1839 (SANNSLIDGF…QIFQEPHPEK (295 aa)) folds into the BEACH domain. Lysine 1667 participates in a covalent cross-link: Glycyl lysine isopeptide (Lys-Gly) (interchain with G-Cter in ubiquitin). WD repeat units follow at residues 1927 to 1965 (THMA…HSVS), 1976 to 2015 (GHLC…LVRQ), 2017 to 2054 (TNDA…YTSK), 2072 to 2111 (KLDA…HNEW), and 2129 to 2167 (SIKG…AIWY).

The protein localises to the cytoplasm. The protein resides in the membrane. Its function is as follows. May be involved in protein sorting and cell wall formation. The polypeptide is Beige protein homolog 1 (BPH1) (Saccharomyces cerevisiae (strain ATCC 204508 / S288c) (Baker's yeast)).